The primary structure comprises 769 residues: Integrin beta-8 (769 aa).

The signal sequence occupies residues 1–42; the sequence is MCGSALAFFTAAFVCLQNDRRGPASFLWAAWVFSLVLGLGQG. Residues 43–684 lie on the Extracellular side of the membrane; that stretch reads EDNRCASSNA…ECFSSPSYLR (642 aa). The PSI domain maps to 46-95; sequence RCASSNAASCARCLALGPECGWCVQEDFISGGSRSERCDIVSNLISKGCS. Cystine bridges form between C47-C65, C55-C469, C58-C83, C68-C94, C211-C218, C266-C307, C407-C419, C439-C467, C471-C491, C471-C494, C481-C494, C499-C528, C511-C526, C520-C531, C533-C546, C553-C567, C561-C572, C574-C583, C585-C609, C593-C607, C601-C612, C614-C624, C627-C630, C634-C661, and C640-C657. Positions 146 to 384 constitute a VWFA domain; it reads PVDLYYLVDV…NLVVEAYQKL (239 aa). Mg(2+)-binding residues include D154 and S156. Residue D193 coordinates Ca(2+). The N-linked (GlcNAc...) asparagine glycan is linked to N233. 4 residues coordinate Ca(2+): N249, D251, P253, and E254. Residue E254 coordinates Mg(2+). Residue N402 is glycosylated (N-linked (GlcNAc...) asparagine). N421, N431, N456, and N466 each carry an N-linked (GlcNAc...) asparagine glycan. I-EGF domains follow at residues 471–495, 499–547, 548–584, and 585–625; these read CEDN…FQCD, CHFD…KYCE, KDDF…DRCQ, and CPSA…RFCE. N-linked (GlcNAc...) asparagine glycosylation is present at N648. The chain crosses the membrane as a helical span at residues 685–704; that stretch reads IFFIIFIVTFLIGLLKVLII. At 705–769 the chain is on the cytoplasmic side; sequence RQVILQWNSN…NAHETFRCNF (65 aa).

The protein belongs to the integrin beta chain family. In terms of assembly, heterodimer of an alpha and a beta subunit. Beta-8 (ITGB8) associates with alpha-V (ITGAV) to form ITGAV:ITGB8. ITGAV:ITGB8 interacts with TGFB1. Placenta, kidney, brain, ovary, uterus and in several transformed cells. Transiently expressed in 293 human embryonic kidney cells.

It is found in the cell membrane. In terms of biological role, integrin alpha-V:beta-8 (ITGAV:ITGB8) is a receptor for fibronectin. It recognizes the sequence R-G-D in its ligands. Integrin alpha-V:beta-6 (ITGAV:ITGB6) mediates R-G-D-dependent release of transforming growth factor beta-1 (TGF-beta-1) from regulatory Latency-associated peptide (LAP), thereby playing a key role in TGF-beta-1 activation on the surface of activated regulatory T-cells (Tregs). Required during vasculogenesis. The chain is Integrin beta-8 from Homo sapiens (Human).